The sequence spans 360 residues: UDP-N-acetylglucosamine--N-acetylmuramyl-(pentapeptide) pyrophosphoryl-undecaprenol N-acetylglucosamine transferase (360 aa).

UDP-N-acetyl-alpha-D-glucosamine is bound by residues serine 198 and glutamine 289.

This sequence belongs to the glycosyltransferase 28 family. MurG subfamily.

It localises to the cell membrane. It carries out the reaction Mur2Ac(oyl-L-Ala-gamma-D-Glu-L-Lys-D-Ala-D-Ala)-di-trans,octa-cis-undecaprenyl diphosphate + UDP-N-acetyl-alpha-D-glucosamine = beta-D-GlcNAc-(1-&gt;4)-Mur2Ac(oyl-L-Ala-gamma-D-Glu-L-Lys-D-Ala-D-Ala)-di-trans,octa-cis-undecaprenyl diphosphate + UDP + H(+). It participates in cell wall biogenesis; peptidoglycan biosynthesis. Its function is as follows. Cell wall formation. Catalyzes the transfer of a GlcNAc subunit on undecaprenyl-pyrophosphoryl-MurNAc-pentapeptide (lipid intermediate I) to form undecaprenyl-pyrophosphoryl-MurNAc-(pentapeptide)GlcNAc (lipid intermediate II). The chain is UDP-N-acetylglucosamine--N-acetylmuramyl-(pentapeptide) pyrophosphoryl-undecaprenol N-acetylglucosamine transferase from Streptococcus pyogenes serotype M4 (strain MGAS10750).